A 470-amino-acid polypeptide reads, in one-letter code: Light-independent protochlorophyllide reductase subunit N (470 aa).

3 residues coordinate [4Fe-4S] cluster: Cys23, Cys48, and Cys108.

It belongs to the BchN/ChlN family. In terms of assembly, protochlorophyllide reductase is composed of three subunits; ChlL, ChlN and ChlB. Forms a heterotetramer of two ChlB and two ChlN subunits. The cofactor is [4Fe-4S] cluster.

It localises to the plastid. The protein resides in the chloroplast. It catalyses the reaction chlorophyllide a + oxidized 2[4Fe-4S]-[ferredoxin] + 2 ADP + 2 phosphate = protochlorophyllide a + reduced 2[4Fe-4S]-[ferredoxin] + 2 ATP + 2 H2O. The protein operates within porphyrin-containing compound metabolism; chlorophyll biosynthesis (light-independent). Functionally, component of the dark-operative protochlorophyllide reductase (DPOR) that uses Mg-ATP and reduced ferredoxin to reduce ring D of protochlorophyllide (Pchlide) to form chlorophyllide a (Chlide). This reaction is light-independent. The NB-protein (ChlN-ChlB) is the catalytic component of the complex. In Zygnema circumcarinatum (Green alga), this protein is Light-independent protochlorophyllide reductase subunit N.